We begin with the raw amino-acid sequence, 372 residues long: Spermidine/putrescine import ATP-binding protein PotA (372 aa).

Positions 13–243 (IKLTGISKSF…PKNLFVARFI (231 aa)) constitute an ABC transporter domain. An ATP-binding site is contributed by 45-52 (GPSGCGKT).

Belongs to the ABC transporter superfamily. Spermidine/putrescine importer (TC 3.A.1.11.1) family. As to quaternary structure, the complex is composed of two ATP-binding proteins (PotA), two transmembrane proteins (PotB and PotC) and a solute-binding protein (PotD).

Its subcellular location is the cell inner membrane. The catalysed reaction is ATP + H2O + polyamine-[polyamine-binding protein]Side 1 = ADP + phosphate + polyamineSide 2 + [polyamine-binding protein]Side 1.. In terms of biological role, part of the ABC transporter complex PotABCD involved in spermidine/putrescine import. Responsible for energy coupling to the transport system. This chain is Spermidine/putrescine import ATP-binding protein PotA, found in Aliivibrio fischeri (strain ATCC 700601 / ES114) (Vibrio fischeri).